Consider the following 315-residue polypeptide: MDGIIQIISAFIVIIEIIIGWFGNGFIVLVNCMHWIKRRRISTVNQILTALAFSRIYLLLTVFTVILASVQYSNILVTRREVKVIIFHLITSNHFSMWLAACLGLFYFLKIANFSNFIFVFLKKRVNKVVSGTLLMSLVFLFLNTLLINSYIDAQIDDYRGYLLYDFTSNITVSFYRVILVINNCIFTSIPFALSQSTFLMLIFSLWRHYKKMQQHAQRCRDTLTNAHIKVLQTMIMYVLLSAIFFLFLSMQIWRNKLMENILFIRFCETVAAVFPSGHSCVLIWGDTNLRQTFLSVLWWLKHRFTLWVPKLYCR.

At 1-9 the chain is on the extracellular side; that stretch reads MDGIIQIIS. A helical membrane pass occupies residues 10–30; that stretch reads AFIVIIEIIIGWFGNGFIVLV. The Cytoplasmic segment spans residues 31–46; the sequence is NCMHWIKRRRISTVNQ. A helical membrane pass occupies residues 47-67; the sequence is ILTALAFSRIYLLLTVFTVIL. The Extracellular segment spans residues 68-101; it reads ASVQYSNILVTRREVKVIIFHLITSNHFSMWLAA. A helical membrane pass occupies residues 102–122; it reads CLGLFYFLKIANFSNFIFVFL. The Cytoplasmic portion of the chain corresponds to 123-128; that stretch reads KKRVNK. The chain crosses the membrane as a helical span at residues 129 to 149; it reads VVSGTLLMSLVFLFLNTLLIN. Residues 150–185 lie on the Extracellular side of the membrane; that stretch reads SYIDAQIDDYRGYLLYDFTSNITVSFYRVILVINNC. Asn-170 carries N-linked (GlcNAc...) asparagine glycosylation. A helical membrane pass occupies residues 186–206; it reads IFTSIPFALSQSTFLMLIFSL. Topologically, residues 207-233 are cytoplasmic; sequence WRHYKKMQQHAQRCRDTLTNAHIKVLQ. A helical transmembrane segment spans residues 234–254; that stretch reads TMIMYVLLSAIFFLFLSMQIW. Topologically, residues 255–266 are extracellular; sequence RNKLMENILFIR. The chain crosses the membrane as a helical span at residues 267–287; sequence FCETVAAVFPSGHSCVLIWGD. At 288–315 the chain is on the cytoplasmic side; the sequence is TNLRQTFLSVLWWLKHRFTLWVPKLYCR.

The protein belongs to the G-protein coupled receptor T2R family.

The protein localises to the membrane. Its function is as follows. Putative taste receptor which may play a role in the perception of bitterness. In Rattus norvegicus (Rat), this protein is Taste receptor type 2 member 129.